The chain runs to 487 residues: Serine/threonine-protein kinase 4 (487 aa).

Residue Met1 is modified to N-acetylmethionine. Position 3 is a phosphothreonine (Thr3). The Protein kinase domain occupies 30–281; the sequence is FDVLEKLGEG…ATQLLQHPFV (252 aa). ATP-binding positions include 36 to 44 and Lys59; that span reads LGEGSYGSV. Asp149 functions as the Proton acceptor in the catalytic mechanism. Residue Thr183 is modified to Phosphothreonine; by autocatalysis. Ser265 is modified (phosphoserine). Residues 290–310 adopt a coiled-coil conformation; it reads LRDLINEAMDVKLKRQESQQR. Over residues 303-312 the composition is skewed to basic and acidic residues; it reads KRQESQQREV. Residues 303–332 form a disordered region; that stretch reads KRQESQQREVDQDDEENSEEDEMDSGTMVR. Over residues 313–326 the composition is skewed to acidic residues; sequence DQDDEENSEEDEMD. Position 320 is a phosphoserine (Ser320). 2 positions are modified to phosphothreonine: Thr340 and Thr367. Position 387 is a phosphothreonine; by PKB/AKT1 (Thr387). 2 positions are modified to phosphoserine: Ser410 and Ser414. The residue at position 433 (Tyr433) is a Phosphotyrosine. The region spanning 433 to 480 is the SARAH domain; sequence YEFLKSWTVEDLQKRLLALDPMMEQEIEEIRQKYQSKRQPILDAIEAK.

Belongs to the protein kinase superfamily. STE Ser/Thr protein kinase family. STE20 subfamily. In terms of assembly, homodimer; mediated via the coiled-coil region. Interacts with NORE1, which inhibits autoactivation. Interacts with and stabilizes SAV1. Interacts with RASSF1. Interacts with FOXO3. Interacts with RASSF2 (via SARAH domain). Interacts with AR, PKB/AKT1, TNNI3 and SIRT1. Interacts with DLG5 (via PDZ domain 3). Interacts with MARK3 and SCRIB in the presence of DLG5. Mg(2+) is required as a cofactor. Autophosphorylated on serine and threonine residues. Phosphorylation at Thr-387 by PKB/AKT1, leads to inhibition of its: kinase activity, nuclear translocation and autophosphorylation at Thr-183. It also diminishes its cleavage by caspases and its ability to phosphorylate FOXO3. Post-translationally, proteolytically cleaved by caspase-3 during apoptosis at Asp-326 and Asp-349 resulting in a 37 kDa or a 39 kDa subunit respectively. The 39 kDa subunit is further cleaved into the 37 kDa form. Proteolytic cleavage results in kinase activation and nuclear translocation of the truncated form (MST1/N). It is less likely that cleavage at Asp-349 is a prerequisite for activation as this site is not conserved in the murine ortholog.

The protein localises to the cytoplasm. It localises to the nucleus. The catalysed reaction is L-seryl-[protein] + ATP = O-phospho-L-seryl-[protein] + ADP + H(+). The enzyme catalyses L-threonyl-[protein] + ATP = O-phospho-L-threonyl-[protein] + ADP + H(+). Inhibited by the C-terminal non-catalytic region. Activated by caspase-cleavage. Full activation also requires homodimerization and autophosphorylation of Thr-183. Activated by RASSF1 which acts by preventing its dephosphorylation. Its function is as follows. Stress-activated, pro-apoptotic kinase which, following caspase-cleavage, enters the nucleus and induces chromatin condensation followed by internucleosomal DNA fragmentation. Key component of the Hippo signaling pathway which plays a pivotal role in organ size control and tumor suppression by restricting proliferation and promoting apoptosis. The core of this pathway is composed of a kinase cascade wherein STK3/MST2 and STK4/MST1, in complex with its regulatory protein SAV1, phosphorylates and activates LATS1/2 in complex with its regulatory protein MOB1, which in turn phosphorylates and inactivates YAP1 oncoprotein and WWTR1/TAZ. Phosphorylation of YAP1 by LATS2 inhibits its translocation into the nucleus to regulate cellular genes important for cell proliferation, cell death, and cell migration. STK3/MST2 and STK4/MST1 are required to repress proliferation of mature hepatocytes, to prevent activation of facultative adult liver stem cells (oval cells), and to inhibit tumor formation. Phosphorylates 'Ser-14' of histone H2B (H2BS14ph) during apoptosis. Phosphorylates FOXO3 upon oxidative stress, which results in its nuclear translocation and cell death initiation. Phosphorylates MOBKL1A, MOBKL1B and RASSF2. Phosphorylates TNNI3 (cardiac Tn-I) and alters its binding affinity to TNNC1 (cardiac Tn-C) and TNNT2 (cardiac Tn-T). Phosphorylates FOXO1 on 'Ser-212' and regulates its activation and stimulates transcription of PMAIP1 in a FOXO1-dependent manner. Phosphorylates SIRT1 and inhibits SIRT1-mediated p53/TP53 deacetylation, thereby promoting p53/TP53 dependent transcription and apoptosis upon DNA damage. Acts as an inhibitor of PKB/AKT1. Phosphorylates AR on 'Ser-650' and suppresses its activity by intersecting with PKB/AKT1 signaling and antagonizing formation of AR-chromatin complexes. The sequence is that of Serine/threonine-protein kinase 4 (STK4) from Aotus nancymaae (Ma's night monkey).